The chain runs to 212 residues: Fibrillarin-like rRNA/tRNA 2'-O-methyltransferase (212 aa).

S-adenosyl-L-methionine is bound by residues 73 to 74 (TT), 91 to 92 (EI), 116 to 117 (DA), and 136 to 139 (DVAQ).

This sequence belongs to the methyltransferase superfamily. Fibrillarin family. Interacts with nop5. Component of box C/D small ribonucleoprotein (sRNP) particles that contain rpl7ae, FlpA and nop5, plus a guide RNA.

In terms of biological role, involved in pre-rRNA and tRNA processing. Utilizes the methyl donor S-adenosyl-L-methionine to catalyze the site-specific 2'-hydroxyl methylation of ribose moieties in rRNA and tRNA. Site specificity is provided by a guide RNA that base pairs with the substrate. Methylation occurs at a characteristic distance from the sequence involved in base pairing with the guide RNA. The protein is Fibrillarin-like rRNA/tRNA 2'-O-methyltransferase of Methanothrix thermoacetophila (strain DSM 6194 / JCM 14653 / NBRC 101360 / PT) (Methanosaeta thermophila).